We begin with the raw amino-acid sequence, 279 residues long: MAEEQGRGRHGPDPAPRPQKPPVEVLASSSGAEGPPLMRKRSSKREKGLRGSRKGPSSSGEQTPMQGPEAPGSSKNPSRTREGQEGPIPSASGLAPRRQSHRHRPGPQHDAAQRMYGPLLNRIFGKDRELGPEELDELQAAFEEFDTDHDGYIGYRDLGECMRTLGYMPTEMELIEVSQHVKMRMGGRVDFEEFVEMMGPKLREETAHMLGLRELRIAFREFDRDRDGRITVAELREAAPALLGEPLVGPELEEMLQEVDLNGDGTVDFNEFVMMLSRH.

Positions 1–12 (MAEEQGRGRHGP) are enriched in basic and acidic residues. The interval 1–114 (MAEEQGRGRH…PGPQHDAAQR (114 aa)) is disordered. Residue serine 42 is modified to Phosphoserine. Positions 55–65 (GPSSSGEQTPM) are enriched in polar residues. EF-hand domains are found at residues 133–168 (EELD…LGYM), 187–204 (GRVD…KLRE), 210–245 (LGLR…LLGE), and 247–279 (LVGP…LSRH). Residues aspartate 146, aspartate 148, aspartate 150, tyrosine 152, and aspartate 157 each coordinate Ca(2+). Ca(2+)-binding residues include aspartate 223, aspartate 225, aspartate 227, arginine 229, glutamate 234, aspartate 260, asparagine 262, aspartate 264, threonine 266, and glutamate 271.

As to quaternary structure, interacts with CACNA1F and CACNA1D (via IQ domain) in a calcium independent manner. Interacts (via N-terminus) with UNC119. In terms of processing, phosphorylated. Phosphorylation levels change with the light conditions and regulate the activity. In terms of tissue distribution, expressed in the retina.

The protein resides in the cytoplasm. The protein localises to the presynapse. Its function is as follows. May play a role in normal synaptic function, probably through regulation of Ca(2+) influx and neurotransmitter release in photoreceptor synaptic terminals and in auditory transmission. Modulator of CACNA1F, shifting the activation range to more hyperpolarized voltages. The protein is Calcium-binding protein 4 (CABP4) of Bos taurus (Bovine).